We begin with the raw amino-acid sequence, 662 residues long: Mitochondrial Rho GTPase 1 (662 aa).

The Cytoplasmic portion of the chain corresponds to 1–634 (MTKETIRVVI…AKDVDYRQTA (634 aa)). A Miro 1 domain is found at 3-185 (KETIRVVICG…FYLCQRAITH (183 aa)). GTP is bound by residues 12-19 (GDEGVGKS), 62-64 (DTS), and 116-119 (NKCD). 2 consecutive EF-hand domains span residues 201–236 (LAVMALKRIFLLSDLNQDSYLDDNEILGLQKKCFNK) and 330–365 (KGYRFLVDIFLKFDIDNDGGLNNQELHRLFKCTPGL). Positions 214, 216, 218, 220, 225, 343, 345, 347, and 354 each coordinate Ca(2+). One can recognise a Miro 2 domain in the interval 446–611 (RKVFNCFVIG…FIKITEAALD (166 aa)). Residues 455 to 462 (GKPCCGKS), 491 to 495 (ELKGG), and 560 to 563 (SKAD) contribute to the GTP site. A helical; Anchor for type IV membrane protein transmembrane segment spans residues 635 to 655 (LIFGSTVGFVALCSFTLMKLF). The Mitochondrial intermembrane portion of the chain corresponds to 656 to 662 (KSSKFSK).

It belongs to the mitochondrial Rho GTPase family.

Its subcellular location is the mitochondrion outer membrane. Functionally, mitochondrial GTPase involved in mitochondrial trafficking. Probably involved in control of anterograde transport of mitochondria and their subcellular distribution. This is Mitochondrial Rho GTPase 1 (GEM1) from Saccharomyces cerevisiae (strain ATCC 204508 / S288c) (Baker's yeast).